The sequence spans 264 residues: Glutamate racemase (264 aa).

Substrate contacts are provided by residues 10–11 and 42–43; these read DS and YG. The active-site Proton donor/acceptor is the Cys-73. 74–75 lines the substrate pocket; the sequence is NT. Cys-183 functions as the Proton donor/acceptor in the catalytic mechanism. 184–185 serves as a coordination point for substrate; it reads TH.

The protein belongs to the aspartate/glutamate racemases family.

The enzyme catalyses L-glutamate = D-glutamate. The protein operates within cell wall biogenesis; peptidoglycan biosynthesis. Provides the (R)-glutamate required for cell wall biosynthesis. The polypeptide is Glutamate racemase (Streptococcus sanguinis (strain SK36)).